The sequence spans 286 residues: uncharacterized protein (286 aa).

Residues 8–28 (PLSGFISSLIWWLLFFYLIMA) traverse the membrane as a helical segment.

To M.jannaschii MJ1495.

It is found in the membrane. This is an uncharacterized protein from Methanocaldococcus jannaschii (strain ATCC 43067 / DSM 2661 / JAL-1 / JCM 10045 / NBRC 100440) (Methanococcus jannaschii).